Consider the following 577-residue polypeptide: Double-stranded RNA-binding protein Staufen homolog 1 (577 aa).

Ser2 is modified (N-acetylserine). A compositionally biased stretch (polar residues) spans 34-44 (SIPSTTSSLPS). Residues 34 to 55 (SIPSTTSSLPSENAGRPIQNSA) are disordered. Positions 72-162 (TPTVELNALC…AAKALRILQN (91 aa)) constitute a DRBM 1 domain. Asymmetric dimethylarginine is present on Arg108. The residue at position 115 (Arg115) is an Asymmetric dimethylarginine; alternate. Arg115 is modified (omega-N-methylarginine; alternate). Position 176 is a phosphoserine (Ser176). The DRBM 2 domain occupies 184-251 (SEISQVFEIA…AIAVLEELKK (68 aa)). A Phosphoserine modification is found at Ser278. The DRBM 3 domain occupies 286 to 354 (NPISRLAQIQ…AENMLEILGF (69 aa)). A disordered region spans residues 360-397 (QPTKPALKSEEKTPIKKPGDGRKVTFFEPGSGDENGTS). A compositionally biased stretch (basic and acidic residues) spans 366–384 (LKSEEKTPIKKPGDGRKVT). Ser390 is modified (phosphoserine).

As to quaternary structure, binds tubulin. Binds with low affinity single-stranded RNA or DNA homopolymers. Interacts with CASC3 in an RNA-dependent manner. Identified in a mRNP complex, at least composed of DHX9, DDX3X, ELAVL1, HNRNPU, IGF2BP1, ILF3, PABPC1, PCBP2, PTBP2, STAU1, STAU2, SYNCRIP and YBX1. In terms of assembly, (Microbial infection) Interacts with HERV-K rec and gag proteins. (Microbial infection) Interacts with HIV-1 GAG polyprotein. As to quaternary structure, (Microbial infection) Interacts with influenza virus NS1 protein. In terms of assembly, (Microbial infection) Interacts with Ebola virus NP, VP30 and VP35. Widely expressed. Expressed in brain, pancreas, heart, skeletal muscles, liver, lung, kidney and placenta.

The protein localises to the cytoplasm. Its subcellular location is the rough endoplasmic reticulum. Its function is as follows. Binds double-stranded RNA (regardless of the sequence) and tubulin. May play a role in specific positioning of mRNAs at given sites in the cell by cross-linking cytoskeletal and RNA components, and in stimulating their translation at the site. In terms of biological role, (Microbial infection) Plays a role in virus particles production of many viruses including of HIV-1, HERV-K, ebola virus and influenza virus. Acts by interacting with various viral proteins involved in particle budding process. The sequence is that of Double-stranded RNA-binding protein Staufen homolog 1 (STAU1) from Homo sapiens (Human).